Consider the following 126-residue polypeptide: Small ribosomal subunit protein uS8 (126 aa).

It belongs to the universal ribosomal protein uS8 family. In terms of assembly, part of the 30S ribosomal subunit. Contacts proteins S5 and S12.

One of the primary rRNA binding proteins, it binds directly to 16S rRNA central domain where it helps coordinate assembly of the platform of the 30S subunit. This chain is Small ribosomal subunit protein uS8, found in Desulfovibrio desulfuricans (strain ATCC 27774 / DSM 6949 / MB).